Here is a 261-residue protein sequence, read N- to C-terminus: MSESLHLTRNGPILEITLDRPKANAIDAKTSFAMGEAFLNFRDDPELRVAIITGGGEKFFSAGWDLKAAAEGEAPDADFGSGGFAGLTEIFDLDKPVIAAVNGYAFGGGFELALAADFIVCAENASFALPEAKLGIVPDSGGVLRLPKLLPPAIVNEMVMTGRRMSAEEALRWGVVNRVVSQSELMDSARELAQQLVNSAPLAIAALKEIYRATSEMPVEEGYRYIRSGVLKHYPSVLHSEDALEGPQAFAEKRDPVWKGR.

Glutamate 111 acts as the Nucleophile in catalysis. The active-site Proton acceptor is the glutamate 131.

Belongs to the enoyl-CoA hydratase/isomerase family.

The enzyme catalyses (R)-carnitinyl-CoA = crotonobetainyl-CoA + H2O. Its pathway is amine and polyamine metabolism; carnitine metabolism. Catalyzes the reversible dehydration of L-carnitinyl-CoA to crotonobetainyl-CoA. The polypeptide is Carnitinyl-CoA dehydratase (Salmonella enteritidis PT4 (strain P125109)).